The following is an 83-amino-acid chain: Large ribosomal subunit protein bL31B (83 aa).

It belongs to the bacterial ribosomal protein bL31 family. Type B subfamily. As to quaternary structure, part of the 50S ribosomal subunit.

In Leifsonia xyli subsp. xyli (strain CTCB07), this protein is Large ribosomal subunit protein bL31B.